We begin with the raw amino-acid sequence, 691 residues long: Elongation factor G (691 aa).

Residues Glu-8–Thr-282 form the tr-type G domain. Residues Ala-17 to Thr-24, Asp-81 to His-85, and Asn-135 to Asp-138 contribute to the GTP site.

The protein belongs to the TRAFAC class translation factor GTPase superfamily. Classic translation factor GTPase family. EF-G/EF-2 subfamily.

The protein localises to the cytoplasm. Functionally, catalyzes the GTP-dependent ribosomal translocation step during translation elongation. During this step, the ribosome changes from the pre-translocational (PRE) to the post-translocational (POST) state as the newly formed A-site-bound peptidyl-tRNA and P-site-bound deacylated tRNA move to the P and E sites, respectively. Catalyzes the coordinated movement of the two tRNA molecules, the mRNA and conformational changes in the ribosome. The protein is Elongation factor G of Natranaerobius thermophilus (strain ATCC BAA-1301 / DSM 18059 / JW/NM-WN-LF).